The primary structure comprises 446 residues: Argininosuccinate synthase (446 aa).

Residues 17 to 25 and alanine 43 contribute to the ATP site; that span reads AFSGGLDTS. Residue tyrosine 99 participates in L-citrulline binding. 2 residues coordinate ATP: glycine 129 and threonine 131. L-aspartate is bound by residues threonine 131, asparagine 135, and aspartate 136. Asparagine 135 contacts L-citrulline. Residue aspartate 136 participates in ATP binding. 2 residues coordinate L-citrulline: arginine 139 and serine 192. Aspartate 194 is a binding site for ATP. Residues threonine 201, glutamate 203, and glutamate 280 each coordinate L-citrulline.

It belongs to the argininosuccinate synthase family. Type 2 subfamily. Homotetramer.

It is found in the cytoplasm. The enzyme catalyses L-citrulline + L-aspartate + ATP = 2-(N(omega)-L-arginino)succinate + AMP + diphosphate + H(+). It participates in amino-acid biosynthesis; L-arginine biosynthesis; L-arginine from L-ornithine and carbamoyl phosphate: step 2/3. The protein is Argininosuccinate synthase of Burkholderia mallei (strain NCTC 10247).